We begin with the raw amino-acid sequence, 400 residues long: 1-deoxy-D-xylulose 5-phosphate reductoisomerase (400 aa).

T10, G11, S12, I13, G36, N38, and N124 together coordinate NADPH. Residue K125 coordinates 1-deoxy-D-xylulose 5-phosphate. E126 contributes to the NADPH binding site. D150 is a binding site for Mn(2+). Positions 151, 152, 186, and 209 each coordinate 1-deoxy-D-xylulose 5-phosphate. E152 contacts Mn(2+). Residue G215 coordinates NADPH. 1-deoxy-D-xylulose 5-phosphate is bound by residues S222, N227, K228, and E231. A Mn(2+)-binding site is contributed by E231.

Belongs to the DXR family. Requires Mg(2+) as cofactor. It depends on Mn(2+) as a cofactor.

The catalysed reaction is 2-C-methyl-D-erythritol 4-phosphate + NADP(+) = 1-deoxy-D-xylulose 5-phosphate + NADPH + H(+). The protein operates within isoprenoid biosynthesis; isopentenyl diphosphate biosynthesis via DXP pathway; isopentenyl diphosphate from 1-deoxy-D-xylulose 5-phosphate: step 1/6. Catalyzes the NADPH-dependent rearrangement and reduction of 1-deoxy-D-xylulose-5-phosphate (DXP) to 2-C-methyl-D-erythritol 4-phosphate (MEP). The protein is 1-deoxy-D-xylulose 5-phosphate reductoisomerase of Aliivibrio fischeri (strain MJ11) (Vibrio fischeri).